A 419-amino-acid chain; its full sequence is eIF5-mimic protein 1 (419 aa).

A disordered region spans residues methionine 1–lysine 22. Lysine 117 carries the N6-acetyllysine modification. Residues valine 248 to glutamate 415 enclose the W2 domain. Residues serine 412, serine 414, and serine 419 each carry the phosphoserine modification.

Belongs to the BZW family. In terms of assembly, interacts with EIF3E, EIF2S2 and EIF3C. As to expression, expressed at high levels in heart, and at lower levels in skeletal muscle, spleen and lung. Expressed at low levels in brain regions where nascent and immature neurons are present.

It localises to the cytoplasm. Functionally, translation initiation regulator which represses non-AUG initiated translation and repeat-associated non-AUG (RAN) initiated translation by acting as a competitive inhibitor of eukaryotic translation initiation factor 5 (EIF5) function. Increases the accuracy of translation initiation by impeding EIF5-dependent translation from non-AUG codons by competing with it for interaction with EIF2S2 within the 43S pre-initiation complex (PIC) in an EIF3C-binding dependent manner. This is eIF5-mimic protein 1 (Bzw2) from Rattus norvegicus (Rat).